The chain runs to 278 residues: Manganese import system permease protein ScaB (278 aa).

8 helical membrane-spanning segments follow: residues 18-38 (ALIT…FIIL), 40-60 (GMSL…ALSF), 61-81 (ILGI…SILI), 136-156 (VTIG…RPLL), 172-192 (VKLY…TAMQ), 194-214 (VGTI…YLYA), 220-240 (MMLL…FIGY), and 244-264 (IAVG…SFFI).

This sequence belongs to the ABC-3 integral membrane protein family.

It is found in the cell membrane. Part of an ABC transporter complex involved in manganese import. The protein is Manganese import system permease protein ScaB of Streptococcus pneumoniae.